A 107-amino-acid polypeptide reads, in one-letter code: YcgL domain-containing protein Pcryo_0807 (107 aa).

The 95-residue stretch at 1–95 folds into the YcgL domain; the sequence is MHCDIYKFLK…QDVMRRQAEL (95 aa).

The polypeptide is YcgL domain-containing protein Pcryo_0807 (Psychrobacter cryohalolentis (strain ATCC BAA-1226 / DSM 17306 / VKM B-2378 / K5)).